Consider the following 773-residue polypeptide: Ethylene receptor 2 (773 aa).

4 helical membrane-spanning segments follow: residues 4-24 (EIAS…VLAI), 53-73 (VSDF…LYFV), 82-102 (WVLF…LLHG), and 122-142 (LTAL…PLLL). Cys94 and His98 together coordinate Cu cation. The GAF domain occupies 187–331 (DRHTILYTTL…VVADQVTVAL (145 aa)). The region spanning 374–614 (TMSEGMRRPM…PETMSLLLRF (241 aa)) is the Histidine kinase domain. The Response regulatory domain occupies 647-766 (QVLLVDTNDS…AMESELRRVL (120 aa)). Asp702 carries the post-translational modification 4-aspartylphosphate. A Glycyl lysine isopeptide (Lys-Gly) (interchain with G-Cter in ubiquitin) cross-link involves residue Lys751.

The protein belongs to the ethylene receptor family. Heteromer with ETR1. Binds to MRF3/ECIP1. Cu cation serves as cofactor. In terms of processing, autophosphorylated predominantly on Ser residues. Expressed in seedlings, roots, leaves, flowers, mature siliques, shoot apical meristems, leaf primordia, inflorescence meristems, young floral meristems, developing petals, carpels and ovules. Low expression in stamens.

It is found in the endoplasmic reticulum membrane. Functionally, ethylene receptor related to bacterial two-component regulators. Acts as a redundant negative regulator of ethylene signaling. The polypeptide is Ethylene receptor 2 (Arabidopsis thaliana (Mouse-ear cress)).